A 217-amino-acid chain; its full sequence is Octanoyltransferase (217 aa).

The 183-residue stretch at 34–216 (SETRDELWLL…AASRASRHDR (183 aa)) folds into the BPL/LPL catalytic domain. Substrate-binding positions include 73 to 80 (RGGQVTWH), 140 to 142 (ALG), and 153 to 155 (GLS). Cys-171 acts as the Acyl-thioester intermediate in catalysis.

Belongs to the LipB family.

The protein localises to the cytoplasm. It catalyses the reaction octanoyl-[ACP] + L-lysyl-[protein] = N(6)-octanoyl-L-lysyl-[protein] + holo-[ACP] + H(+). It participates in protein modification; protein lipoylation via endogenous pathway; protein N(6)-(lipoyl)lysine from octanoyl-[acyl-carrier-protein]: step 1/2. Functionally, catalyzes the transfer of endogenously produced octanoic acid from octanoyl-acyl-carrier-protein onto the lipoyl domains of lipoate-dependent enzymes. Lipoyl-ACP can also act as a substrate although octanoyl-ACP is likely to be the physiological substrate. This Halorhodospira halophila (strain DSM 244 / SL1) (Ectothiorhodospira halophila (strain DSM 244 / SL1)) protein is Octanoyltransferase.